We begin with the raw amino-acid sequence, 552 residues long: Chaperonin GroEL (552 aa).

ATP contacts are provided by residues 30–33, Lys51, 87–91, Gly415, and Asp499; these read TLGP and DGTTT.

Belongs to the chaperonin (HSP60) family. As to quaternary structure, forms a cylinder of 14 subunits composed of two heptameric rings stacked back-to-back. Interacts with the co-chaperonin GroES.

It localises to the cytoplasm. It catalyses the reaction ATP + H2O + a folded polypeptide = ADP + phosphate + an unfolded polypeptide.. Its function is as follows. Together with its co-chaperonin GroES, plays an essential role in assisting protein folding. The GroEL-GroES system forms a nano-cage that allows encapsulation of the non-native substrate proteins and provides a physical environment optimized to promote and accelerate protein folding. This Hamiltonella defensa subsp. Acyrthosiphon pisum (strain 5AT) protein is Chaperonin GroEL.